Reading from the N-terminus, the 316-residue chain is tRNA dimethylallyltransferase (316 aa).

23 to 30 (GPTASGKS) contacts ATP. 25 to 30 (TASGKS) lines the substrate pocket. Positions 48 to 51 (DSMQ) are interaction with substrate tRNA.

This sequence belongs to the IPP transferase family. As to quaternary structure, monomer. Mg(2+) is required as a cofactor.

It catalyses the reaction adenosine(37) in tRNA + dimethylallyl diphosphate = N(6)-dimethylallyladenosine(37) in tRNA + diphosphate. Its function is as follows. Catalyzes the transfer of a dimethylallyl group onto the adenine at position 37 in tRNAs that read codons beginning with uridine, leading to the formation of N6-(dimethylallyl)adenosine (i(6)A). The chain is tRNA dimethylallyltransferase from Rhodopseudomonas palustris (strain BisB18).